The following is a 301-amino-acid chain: uncharacterized protein (301 aa).

An N-terminal signal peptide occupies residues 1 to 22; it reads MPGRFTVALVIALGGTCGVADA. Residues 31–300 form the GP-PDE domain; it reads PMIVAHRAGT…DSPLAAQQWR (270 aa).

This is an uncharacterized protein from Mycobacterium tuberculosis (strain ATCC 25618 / H37Rv).